Here is a 308-residue protein sequence, read N- to C-terminus: GATA transcription factor 9 (308 aa).

Residues 34-57 (DDGLNTLPDSSTLSTGTLTDSSNS) form a disordered region. The span at 39-57 (TLPDSSTLSTGTLTDSSNS) shows a compositional bias: low complexity. Residues 142–149 (KARSKRSR) carry the Nuclear localization signal motif. Residues 193-247 (SGGGRRCLHCATEKTPQWRTGPMGPKTLCNACGVRYKSGRLVPEYRPASSPTFVM) form a GATA-type zinc finger.

Belongs to the type IV zinc-finger family. Class A subfamily.

The protein localises to the nucleus. Transcriptional activator that specifically binds 5'-GATA-3' or 5'-GAT-3' motifs within gene promoters. May be involved in the regulation of some light-responsive genes. This Arabidopsis thaliana (Mouse-ear cress) protein is GATA transcription factor 9 (GATA9).